The chain runs to 309 residues: Xylose/arabinose import permease protein XacI (309 aa).

A run of 6 helical transmembrane segments spans residues 29–49 (LVVF…MTAI), 89–109 (LIMS…AAYG), 121–141 (MLML…VPLA), 170–190 (ELVP…TILF), 227–247 (MFGV…LFAF), and 282–302 (AAFL…EQFA). The region spanning 85 to 297 (FFNSLIMSIP…VPTLILYVAF (213 aa)) is the ABC transmembrane type-1 domain.

The protein belongs to the binding-protein-dependent transport system permease family. In terms of assembly, the complex is composed of two ATP-binding proteins (XacJ and XacK), two transmembrane proteins (XacH and XacI) and a solute-binding protein (XacG).

The protein resides in the cell membrane. Its function is as follows. Part of the ABC transporter complex XacGHIJK involved in the uptake of xylose and arabinose. Responsible for the translocation of the substrate across the membrane. This Haloferax volcanii (strain ATCC 29605 / DSM 3757 / JCM 8879 / NBRC 14742 / NCIMB 2012 / VKM B-1768 / DS2) (Halobacterium volcanii) protein is Xylose/arabinose import permease protein XacI.